Here is a 469-residue protein sequence, read N- to C-terminus: Glutamate--tRNA ligase 2 (469 aa).

Residues 11-21 (PSPTGHLHLGG) carry the 'HIGH' region motif. Residues 238-242 (KLSKR) carry the 'KMSKS' region motif. Lysine 241 contacts ATP.

It belongs to the class-I aminoacyl-tRNA synthetase family. Glutamate--tRNA ligase type 1 subfamily. Monomer.

It localises to the cytoplasm. It carries out the reaction tRNA(Glu) + L-glutamate + ATP = L-glutamyl-tRNA(Glu) + AMP + diphosphate. Functionally, catalyzes the attachment of glutamate to tRNA(Glu) in a two-step reaction: glutamate is first activated by ATP to form Glu-AMP and then transferred to the acceptor end of tRNA(Glu). The protein is Glutamate--tRNA ligase 2 of Ehrlichia chaffeensis (strain ATCC CRL-10679 / Arkansas).